The chain runs to 419 residues: UDP-N-acetylglucosamine 1-carboxyvinyltransferase (419 aa).

A phosphoenolpyruvate-binding site is contributed by 22–23 (KN). Arginine 91 serves as a coordination point for UDP-N-acetyl-alpha-D-glucosamine. The active-site Proton donor is cysteine 115. Cysteine 115 is modified (2-(S-cysteinyl)pyruvic acid O-phosphothioketal). Residues 120-124 (RPVDL), 160-163 (KVSV), aspartate 305, and valine 327 contribute to the UDP-N-acetyl-alpha-D-glucosamine site.

The protein belongs to the EPSP synthase family. MurA subfamily.

The protein resides in the cytoplasm. The catalysed reaction is phosphoenolpyruvate + UDP-N-acetyl-alpha-D-glucosamine = UDP-N-acetyl-3-O-(1-carboxyvinyl)-alpha-D-glucosamine + phosphate. It participates in cell wall biogenesis; peptidoglycan biosynthesis. Its function is as follows. Cell wall formation. Adds enolpyruvyl to UDP-N-acetylglucosamine. The chain is UDP-N-acetylglucosamine 1-carboxyvinyltransferase from Salmonella dublin (strain CT_02021853).